Reading from the N-terminus, the 227-residue chain is A-type potassium channel modulatory protein KCNIP1 (227 aa).

The 57-residue stretch at 38 to 94 folds into the EF-hand 1; degenerate domain; sequence LEMTMVCHRPEGLEQLEAQTNFTKRELQVLYRGFKNECPSGVVNEETFKQIYAQFFP. 3 EF-hand domains span residues 97-132, 133-168, and 181-216; these read DAST…LLRG, TVHE…IYDM, and TPRQ…DDNI. Positions 146, 148, 150, 152, 157, 194, 196, 198, and 205 each coordinate Ca(2+). The tract at residues 214–227 is interaction with KCND2; it reads DNIMRSLQLFQNVM.

It belongs to the recoverin family. Component of heteromultimeric potassium channels. Identified in potassium channel complexes containing KCND1, KCND2, KCND3, KCNIP1, KCNIP2, KCNIP3, KCNIP4, DPP6 and DPP10. Part of a heterooctamer composed of the tetrameric channel and four KCNIP1 chains. Probably part of a complex consisting of KCNIP1, KCNIP2 isoform 3 and KCND2. Self-associates to form homodimers and homotetramers. Interacts with KCNIP2 isoform 3 in a calcium-dependent manner. Interacts with KCND2; this interaction mediates the capture of both the N- and C-terminus of KCND2, thus preventing KCND2 N-type inactivation and modulates the channel gating kinetics. Interacts with KCND3; each KCNIP1 monomer interacts with two adjacent KCND3 subunits, through both the N-terminal inactivation ball of a KCND3 subunit and a C-terminal helix from the adjacent KCND3 subunit, clamping them together; this interaction stabilizes the tetrameric form and modulates the channel gating kinetics namely channel activation and inactivation kinetics and rate of recovery from inactivation. As to expression, detected in hippocampus and in the molecular layer of the dentate gyrus (at protein level). Isoform 1 and isoform 2 are predominantly expressed at equal levels in brain. Colocalizes with KCND3 in inhibitory interneurons in cortex and hippocampus and in striatal interneurons.

The protein localises to the cell membrane. Its subcellular location is the cytoplasm. It is found in the cell projection. The protein resides in the dendrite. In terms of biological role, regulatory subunit of Kv4/D (Shal)-type voltage-gated rapidly inactivating A-type potassium channels. Regulates channel density, inactivation kinetics and rate of recovery from inactivation in a calcium-dependent and isoform-specific manner. Modulates KCND2/Kv4.2 currents. In vitro, modulates KCND1/Kv4.1 currents. Increases the presence of KCND2 at the cell surface. This chain is A-type potassium channel modulatory protein KCNIP1, found in Rattus norvegicus (Rat).